The chain runs to 465 residues: Methionine aminopeptidase 2-2 (465 aa).

Positions 1–13 (MGSKTPNDHRRGP) are enriched in basic and acidic residues. Residues 1–92 (MGSKTPNDHR…KKKTLLGGLQ (92 aa)) are disordered. The span at 44–55 (GETEDGEDEDDD) shows a compositional bias: acidic residues. A compositionally biased stretch (basic residues) spans 71-86 (TKKKNKRKKNKKKKKT). His217 is a binding site for substrate. A divalent metal cation contacts are provided by Asp238, Asp249, and His318. A substrate-binding site is contributed by His326. A divalent metal cation contacts are provided by Glu351 and Glu446.

The protein belongs to the peptidase M24A family. Methionine aminopeptidase eukaryotic type 2 subfamily. The cofactor is Co(2+). It depends on Zn(2+) as a cofactor. Requires Mn(2+) as cofactor. Fe(2+) serves as cofactor.

It is found in the cytoplasm. The enzyme catalyses Release of N-terminal amino acids, preferentially methionine, from peptides and arylamides.. Functionally, cotranslationally removes the N-terminal methionine from nascent proteins. The N-terminal methionine is often cleaved when the second residue in the primary sequence is small and uncharged (Met-Ala-, Cys, Gly, Pro, Ser, Thr, or Val). The polypeptide is Methionine aminopeptidase 2-2 (Ajellomyces dermatitidis (strain ER-3 / ATCC MYA-2586) (Blastomyces dermatitidis)).